A 59-amino-acid polypeptide reads, in one-letter code: Large ribosomal subunit protein uL30 (59 aa).

The protein belongs to the universal ribosomal protein uL30 family. Part of the 50S ribosomal subunit.

This is Large ribosomal subunit protein uL30 from Nocardia farcinica (strain IFM 10152).